The primary structure comprises 1128 residues: MTSLNGRHAEKTIDMPKPSAPKVHVQRSVSRDTIAIHFSASGEEEEEEEEEFRGYLEEGLDDQSIVTGLEAKEDLYLESQGGHDPAGPVSTAPADGLSVSESPAILPVSENTVKLLESPAPALQVLSPVPLALSPGSSSSGPLASSPSVSSLSEQKTSSSSPLSSPSKSPVLSSSASSSALSSAKPFMSLVKSLSTEVEPKESPHPPRHRHLMKTLVKSLSTDTSRQESDTVSYKPPDSKLNLHLFKQFTQPRNTGGDSKTAPSSPLTSPSDTRSFFKVPEMEAKIEDTKRRLSEVIYEPFQLLSKIIGEESGSHRPKALSASASELSSLSGLNGHLESNNYSIKEEEGDSEGEGYGSDSNTSRSDHLKPTEDASKEVEPKGSQASSLKDLGLKTSSLVLEKCSLSALVSKEDEEFCELYTEDFELETEGEGRLDKTLDLPLKPEVLASDGVALESEDEEDSATEHQELPVKTLGFFIMCVYAYLILPLPYYMSGLFLGVGLGFMTAVCMIWFFTPPSAHKHHKSLKALRHQSTRSLDIKEPEILKGWMNEIYNYDPETYHATLTHSVFVRLEGGTLRLSKPNKNISRRASYNETKPEVTYISQKIYDLSDSKIYLVPKSLARKRIWNKKYPICIELGRQDDFMSKAQSDKEATEEKPPPEKELPSEDLKKPPQPQEGTKSSQRDPILYLFGRTGREKEEWFRRFILASRLKSELRKPAGVSGSKSGLLPAHSRHSSPSGHLSHSRSSSKGSVEEMMSQPKQKELVGSVRQKMLLDYSVYMGRCVPQDNRSPHRSPVQSAESSPTASKKLPEAPPSEEEEQEAWVNALLGRIFWDFLGEKYWSDVVSKKIQMKLSKIKLPYFMNELTLTELDMGVAVPKILQAFKPYVDHQGLWIDLEMSYNGSFLMTLETKMNLTKLGKEPLVEALKVGEIGKEGCRPRAYCLADSDEESSSAGSSEEDDPPEPTAGDKQPLPGAEGYVGGHRTSKIMRFVDKITKSKYFQKATETEFIKKKIEEVSNTPLLLTVEVQECRGTLAVNIPPPPTDRIWYGFRKPPYVELKARPKLGEREVTLVHVTEWIEKKLEQELQKVFVMPNMDDVYIPIMHSAMDPRSTSCLLKEPPVETSDQL.

Disordered stretches follow at residues 1–28, 71–99, and 130–279; these read MTSL…VQRS, AKED…GLSV, and PLAL…FFKV. Residues 130–186 show a composition bias toward low complexity; it reads PLALSPGSSSSGPLASSPSVSSLSEQKTSSSSPLSSPSKSPVLSSSASSSALSSAKP. S195 is subject to Phosphoserine. The segment covering 248–274 has biased composition (polar residues); it reads QFTQPRNTGGDSKTAPSSPLTSPSDTR. T261 carries the phosphothreonine modification. 4 positions are modified to phosphoserine: S264, S265, S269, and S294. The tract at residues 345–387 is disordered; it reads KEEEGDSEGEGYGSDSNTSRSDHLKPTEDASKEVEPKGSQASS. Basic and acidic residues predominate over residues 364 to 380; that stretch reads RSDHLKPTEDASKEVEP. The next 2 helical transmembrane spans lie at 473 to 493 and 495 to 515; these read TLGF…PYYM and GLFL…WFFT. N-linked (GlcNAc...) asparagine glycosylation occurs at N593. Basic and acidic residues predominate over residues 645–671; the sequence is SKAQSDKEATEEKPPPEKELPSEDLKK. 4 disordered regions span residues 645-688, 716-765, 787-821, and 945-981; these read SKAQ…DPIL, RKPA…QKEL, QDNR…EEEQ, and ADSD…GYVG. 7 positions are modified to phosphoserine: S733, S739, S745, S749, S752, S799, and S816. Low complexity predominate over residues 736 to 751; the sequence is SSPSGHLSHSRSSSKG. Residues 796 to 806 are compositionally biased toward polar residues; it reads PVQSAESSPTA. The region spanning 817 to 1102 is the SMP-LTD domain; that stretch reads EEEEQEAWVN…MPNMDDVYIP (286 aa). The span at 946–963 shows a compositional bias: acidic residues; the sequence is DSDEESSSAGSSEEDDPP.

The protein localises to the endoplasmic reticulum membrane. The protein resides in the nucleus membrane. Its function is as follows. During endoplasmic reticulum (ER) stress or when cellular ceramide levels increase, may induce contacts between the ER and medial-Golgi complex to facilitate non-vesicular transport of ceramides from the ER to the Golgi complex where they are converted to complex sphingolipids, preventing toxic ceramide accumulation. This chain is Testis-expressed protein 2 (Tex2), found in Mus musculus (Mouse).